The chain runs to 174 residues: Protein GrpE (174 aa).

It belongs to the GrpE family. In terms of assembly, homodimer.

It is found in the cytoplasm. Participates actively in the response to hyperosmotic and heat shock by preventing the aggregation of stress-denatured proteins, in association with DnaK and GrpE. It is the nucleotide exchange factor for DnaK and may function as a thermosensor. Unfolded proteins bind initially to DnaJ; upon interaction with the DnaJ-bound protein, DnaK hydrolyzes its bound ATP, resulting in the formation of a stable complex. GrpE releases ADP from DnaK; ATP binding to DnaK triggers the release of the substrate protein, thus completing the reaction cycle. Several rounds of ATP-dependent interactions between DnaJ, DnaK and GrpE are required for fully efficient folding. The polypeptide is Protein GrpE (Pseudothermotoga lettingae (strain ATCC BAA-301 / DSM 14385 / NBRC 107922 / TMO) (Thermotoga lettingae)).